Reading from the N-terminus, the 283-residue chain is 4-diphosphocytidyl-2-C-methyl-D-erythritol kinase (283 aa).

Lys-10 is an active-site residue. 99–109 contacts ATP; sequence PMGGGLGGGSS. Asp-141 is a catalytic residue.

The protein belongs to the GHMP kinase family. IspE subfamily. In terms of assembly, homodimer.

The catalysed reaction is 4-CDP-2-C-methyl-D-erythritol + ATP = 4-CDP-2-C-methyl-D-erythritol 2-phosphate + ADP + H(+). The protein operates within isoprenoid biosynthesis; isopentenyl diphosphate biosynthesis via DXP pathway; isopentenyl diphosphate from 1-deoxy-D-xylulose 5-phosphate: step 3/6. Functionally, catalyzes the phosphorylation of the position 2 hydroxy group of 4-diphosphocytidyl-2C-methyl-D-erythritol. In Salmonella gallinarum (strain 287/91 / NCTC 13346), this protein is 4-diphosphocytidyl-2-C-methyl-D-erythritol kinase.